Reading from the N-terminus, the 364-residue chain is GTPase Obg (364 aa).

Positions 1 to 159 (MKFLDEAKVY…KTIWLHLKLI (159 aa)) constitute an Obg domain. Positions 160 to 327 (ADAGLVGLPN…VLRALRDIIV (168 aa)) constitute an OBG-type G domain. Residues 166-173 (GLPNAGKS), 191-195 (FTTLH), 212-215 (DIPG), 279-282 (SQID), and 308-310 (SAV) contribute to the GTP site. 2 residues coordinate Mg(2+): Ser-173 and Thr-193. The segment at 333-364 (EKPAKVPKLRHRDMVVTDEGEDKGGDEGDDQP) is disordered.

The protein belongs to the TRAFAC class OBG-HflX-like GTPase superfamily. OBG GTPase family. Monomer. Mg(2+) is required as a cofactor.

The protein localises to the cytoplasm. Functionally, an essential GTPase which binds GTP, GDP and possibly (p)ppGpp with moderate affinity, with high nucleotide exchange rates and a fairly low GTP hydrolysis rate. Plays a role in control of the cell cycle, stress response, ribosome biogenesis and in those bacteria that undergo differentiation, in morphogenesis control. The chain is GTPase Obg from Rhizobium johnstonii (strain DSM 114642 / LMG 32736 / 3841) (Rhizobium leguminosarum bv. viciae).